A 348-amino-acid polypeptide reads, in one-letter code: Benzoate 1,2-dioxygenase electron transfer component (348 aa).

In terms of domain architecture, 2Fe-2S ferredoxin-type spans 14 to 109 (HQVALQFEDG…DAVFQIQASS (96 aa)). Residues Cys51, Cys56, Cys59, and Cys93 each coordinate [2Fe-2S] cluster. The ferredoxin-reductase stretch occupies residues 111-348 (VCKTKIHHFE…NFLFEKFSAN (238 aa)). The FAD-binding FR-type domain maps to 116 to 217 (IHHFEGTLAR…TGPFGSFYLR (102 aa)).

It belongs to the bacterial ring-hydroxylating dioxygenase ferredoxin reductase family. In terms of assembly, this dioxygenase system consists of three proteins: the two subunits of the hydroxylase component (BenA and BenB), and an electron transfer component (BenC). It depends on FAD as a cofactor. [2Fe-2S] cluster serves as cofactor.

The catalysed reaction is 2 reduced [2Fe-2S]-[ferredoxin] + NAD(+) + H(+) = 2 oxidized [2Fe-2S]-[ferredoxin] + NADH. Its pathway is xenobiotic degradation; toluene degradation. Electron transfer component of benzoate 1,2-dioxygenase system. The polypeptide is Benzoate 1,2-dioxygenase electron transfer component (benC) (Acinetobacter baylyi (strain ATCC 33305 / BD413 / ADP1)).